Consider the following 330-residue polypeptide: MHFIDEVKIYIKGGNGGNGCVSFHREKFIDRGGPDGGDGGRGGSVIFRSNHHLNTLVNYRYKQHFTAENGENGKDSNRSGKSGKSLVLDVPIGTQIFSEDGNILLHDFTVDDQSFEIIKGGSGGLGNSHFKSSVNQAPRKRTEGEIAEEMWIHLSLKLLSDVGLVGFPNAGKSTFLSFVTAAKPKIADYPFTTLVPNLGVVYVDDEEFVIADIPGLIEGAHQGHGLGDKFLKHIERCNVLIHLIDGSSNDVVADYNTVRLELESYSDYLKNKIEIICLNKCDVLTDEEIQEKINKLQKVTNKEVFPISTYTNAGVNKIVKLALETIKNQE.

The 159-residue stretch at M1–L159 folds into the Obg domain. The OBG-type G domain occupies S160–K327. Residues G166 to S173, F191 to V195, D212 to G215, N279 to D282, and S308 to Y310 each bind GTP. The Mg(2+) site is built by S173 and T193.

It belongs to the TRAFAC class OBG-HflX-like GTPase superfamily. OBG GTPase family. As to quaternary structure, monomer. Mg(2+) serves as cofactor.

It is found in the cytoplasm. An essential GTPase which binds GTP, GDP and possibly (p)ppGpp with moderate affinity, with high nucleotide exchange rates and a fairly low GTP hydrolysis rate. Plays a role in control of the cell cycle, stress response, ribosome biogenesis and in those bacteria that undergo differentiation, in morphogenesis control. The chain is GTPase Obg from Rickettsia massiliae (strain Mtu5).